The primary structure comprises 694 residues: ATP-dependent RNA helicase DHX33 (694 aa).

In terms of domain architecture, Helicase ATP-binding spans 78–246; that stretch reads LKELEANDTV…FNCKGMYLEG (169 aa). ATP is bound at residue 91 to 98; sequence SETGSGKT. Positions 188–191 match the DEAH box motif; the sequence is DEAH. Residues 270-443 form the Helicase C-terminal domain; that stretch reads TLFHIHRTTP…SMVLQLLALD (174 aa).

The protein belongs to the DEAD box helicase family. DEAH subfamily.

It localises to the nucleus. The protein localises to the nucleolus. The enzyme catalyses ATP + H2O = ADP + phosphate + H(+). Part of a translational control module, also containing pths/DDX47 and ais/DDX52, which coordinates germline stem cell differentiation with ribosome biogenesis during oogenesis. This module allows for coregulation of ribosomal proteins and non1/GTPBP4, a p53 repressor, preventing p53 stabilization, cell cycle arrest and loss of stem cell differentiation. This chain is ATP-dependent RNA helicase DHX33, found in Drosophila melanogaster (Fruit fly).